The primary structure comprises 83 residues: Sulfur carrier protein TusA (83 aa).

Cys20 functions as the Cysteine persulfide intermediate in the catalytic mechanism.

Belongs to the sulfur carrier protein TusA family.

Its subcellular location is the cytoplasm. Functionally, sulfur carrier protein which probably makes part of a sulfur-relay system. This chain is Sulfur carrier protein TusA, found in Pseudomonas fluorescens (strain SBW25).